Here is a 60-residue protein sequence, read N- to C-terminus: Short neurotoxin 1 (60 aa).

Intrachain disulfides connect Cys-3-Cys-22, Cys-17-Cys-39, Cys-41-Cys-52, and Cys-53-Cys-58.

It belongs to the three-finger toxin family. Short-chain subfamily. Type I alpha-neurotoxin sub-subfamily. Expressed by the venom gland.

It is found in the secreted. Its function is as follows. Binds to muscle nicotinic acetylcholine receptor (nAChR) and inhibit acetylcholine from binding to the receptor, thereby impairing neuromuscular transmission. The recombinant protein also barely blocks voltage-gated potassium channel Kv1.3/KCNA3 (2.71% inhibition at 60 nM of toxin). This is Short neurotoxin 1 from Hydrophis lapemoides (Persian gulf sea snake).